The primary structure comprises 296 residues: N-acetylmuramic acid 6-phosphate etherase (296 aa).

The SIS domain occupies 54–217 (VTESFRKGGR…STTSMVGIGK (164 aa)). Glutamate 82 serves as the catalytic Proton donor. Glutamate 113 is an active-site residue.

Belongs to the GCKR-like family. MurNAc-6-P etherase subfamily. Homodimer.

It carries out the reaction N-acetyl-D-muramate 6-phosphate + H2O = N-acetyl-D-glucosamine 6-phosphate + (R)-lactate. Its pathway is amino-sugar metabolism; N-acetylmuramate degradation. Functionally, specifically catalyzes the cleavage of the D-lactyl ether substituent of MurNAc 6-phosphate, producing GlcNAc 6-phosphate and D-lactate. The protein is N-acetylmuramic acid 6-phosphate etherase of Listeria welshimeri serovar 6b (strain ATCC 35897 / DSM 20650 / CCUG 15529 / CIP 8149 / NCTC 11857 / SLCC 5334 / V8).